The following is a 510-amino-acid chain: 2-isopropylmalate synthase (510 aa).

One can recognise a Pyruvate carboxyltransferase domain in the interval 5 to 267 (LVIFDTTLRD…DTRIDTTQIV (263 aa)). Mn(2+) is bound by residues D14, H202, H204, and N238. The regulatory domain stretch occupies residues 392-510 (RLLSLHAVSE…SSLERTHPQI (119 aa)).

It belongs to the alpha-IPM synthase/homocitrate synthase family. LeuA type 1 subfamily. Homodimer. Mn(2+) is required as a cofactor.

It localises to the cytoplasm. It carries out the reaction 3-methyl-2-oxobutanoate + acetyl-CoA + H2O = (2S)-2-isopropylmalate + CoA + H(+). It participates in amino-acid biosynthesis; L-leucine biosynthesis; L-leucine from 3-methyl-2-oxobutanoate: step 1/4. In terms of biological role, catalyzes the condensation of the acetyl group of acetyl-CoA with 3-methyl-2-oxobutanoate (2-ketoisovalerate) to form 3-carboxy-3-hydroxy-4-methylpentanoate (2-isopropylmalate). The protein is 2-isopropylmalate synthase of Nitrosomonas europaea (strain ATCC 19718 / CIP 103999 / KCTC 2705 / NBRC 14298).